Reading from the N-terminus, the 469-residue chain is RuvB-like helicase 2 (469 aa).

73 to 80 (GEPGTGKT) is an ATP binding site.

The protein belongs to the RuvB family. In terms of assembly, forms homohexameric rings. May form a dodecamer with rvb1 made of two stacked hexameric rings. Component of the chromatin remodeling Ino80 complex. Component of the RNA polymerase II holoenzyme complex.

Its subcellular location is the nucleus. It carries out the reaction ATP + H2O = ADP + phosphate + H(+). In terms of biological role, has double-stranded DNA-stimulated ATPase and ATP-dependent DNA helicase (5' to 3') activity suggesting a role in nuclear processes such as recombination and transcription. Its function is as follows. Proposed core component of the chromatin remodeling Ino80 complex which is involved in transcriptional regulation, DNA replication and probably DNA repair. In Dictyostelium discoideum (Social amoeba), this protein is RuvB-like helicase 2 (rvb2).